A 443-amino-acid polypeptide reads, in one-letter code: Tol-Pal system protein TolB (443 aa).

A signal peptide spans 1-33; that stretch reads MKIGIINTKIRTVFSAFACMIAASLVCTMPARA.

Belongs to the TolB family. As to quaternary structure, the Tol-Pal system is composed of five core proteins: the inner membrane proteins TolA, TolQ and TolR, the periplasmic protein TolB and the outer membrane protein Pal. They form a network linking the inner and outer membranes and the peptidoglycan layer.

The protein localises to the periplasm. In terms of biological role, part of the Tol-Pal system, which plays a role in outer membrane invagination during cell division and is important for maintaining outer membrane integrity. The sequence is that of Tol-Pal system protein TolB from Brucella ovis (strain ATCC 25840 / 63/290 / NCTC 10512).